Consider the following 66-residue polypeptide: Large ribosomal subunit protein uL29 (66 aa).

The protein belongs to the universal ribosomal protein uL29 family.

This chain is Large ribosomal subunit protein uL29, found in Rhizobium etli (strain ATCC 51251 / DSM 11541 / JCM 21823 / NBRC 15573 / CFN 42).